A 398-amino-acid polypeptide reads, in one-letter code: S-adenosylmethionine synthase (398 aa).

136–141 (GTGSSD) is an ATP binding site.

Belongs to the AdoMet synthase 2 family. Requires Mg(2+) as cofactor.

It catalyses the reaction L-methionine + ATP + H2O = S-adenosyl-L-methionine + phosphate + diphosphate. The protein operates within amino-acid biosynthesis; S-adenosyl-L-methionine biosynthesis; S-adenosyl-L-methionine from L-methionine: step 1/1. Catalyzes the formation of S-adenosylmethionine from methionine and ATP. The sequence is that of S-adenosylmethionine synthase from Methanosarcina mazei (strain ATCC BAA-159 / DSM 3647 / Goe1 / Go1 / JCM 11833 / OCM 88) (Methanosarcina frisia).